A 109-amino-acid chain; its full sequence is UPF0060 membrane protein ABO_1373 (109 aa).

A run of 4 helical transmembrane segments spans residues 1–21 (MLALYTLGLFILTAVTEIVGC), 33–53 (PGWVLLPAAASLAMFAWLLSL), 63–83 (AAYGGVYVFVALLWLWGVEGV), and 87–107 (PWDFVGVAVALAGMGIIMFAP).

It belongs to the UPF0060 family.

The protein localises to the cell inner membrane. This Alcanivorax borkumensis (strain ATCC 700651 / DSM 11573 / NCIMB 13689 / SK2) protein is UPF0060 membrane protein ABO_1373.